Here is a 410-residue protein sequence, read N- to C-terminus: Regulator of microtubule dynamics protein 2 (410 aa).

Residues 9–28 (LILGIMVGTAGISLLLLWYH) traverse the membrane as a helical segment. Ser-51 is modified (phosphoserine). Residues 68-110 (FQERQLQILEKLNELLTNMEELKEEIRFLKEAIPKLEEYIQDE) adopt a coiled-coil conformation. At Ser-121 the chain carries Phosphoserine. Residues 122 to 131 (PQHRARKRRL) show a composition bias toward basic residues. The disordered stretch occupies residues 122 to 164 (PQHRARKRRLPTIQSSATSNSSEEAESEGGYITANTDTEEQSF). A Phosphothreonine modification is found at Thr-139. The residue at position 152 (Tyr-152) is a Phosphotyrosine. Phosphothreonine occurs at positions 154 and 157.

It belongs to the RMDN family. Interacts with microtubules.

It is found in the membrane. Its subcellular location is the cytoplasm. The protein resides in the cytoskeleton. The protein localises to the spindle. It localises to the spindle pole. The sequence is that of Regulator of microtubule dynamics protein 2 (RMDN2) from Homo sapiens (Human).